Consider the following 503-residue polypeptide: MPSKTKYNLVDDGHDLRIPLHNEDAFQHGISFEAKYVGSLDVPRPNSRVEIVAAMRRIRYEFKAKNIKKKKVSIMVSVDGVKVILKKKKKKKEWTWDESKMLVMQDPIYRIFYVSHDSQDLKIFSYIARDGASNIFRCNVFKSKKKSQAMRIVRTVGQAFEVCHKLSLQHTQQNADGQEDGESERNSDGSGDPGRQLTGAERVSTATAEETDIDAVEVPLPGNDILEFSRGVTDLDAIGKDGGSHIDTTVSPHPQEPMLAASPRMLLPSSSSSKPPGLGTGTPLSTHHQMQLLQQLLQQQQQQTQVAVAQVHLLKDQLAAEAAARLEAQARVHQLLLQNKDMLQHISLLVKQVQELELKLSGQSTMGSQDSLLEITFRSGALPVLCESTTPKPEDLHSPLLGAGLADFAHPVGSPLGRRDCLVKLECFRFLPAEDNQPMAQGEPLLGGLELIKFRESGIASEYESNTDESEERDSWSQEELPRLLNVLQRQELGDSLDDEIAV.

One can recognise a PID domain in the interval 26-191; sequence FQHGISFEAK…ESERNSDGSG (166 aa). The segment at 170–212 is disordered; the sequence is HTQQNADGQEDGESERNSDGSGDPGRQLTGAERVSTATAEETD. Phosphoserine is present on residues S183, S187, S190, and S262. Residues 266–285 are disordered; sequence LLPSSSSSKPPGLGTGTPLS. Residues 319–360 adopt a coiled-coil conformation; sequence AAEAAARLEAQARVHQLLLQNKDMLQHISLLVKQVQELELKL. Residues S368, S371, S398, and S414 each carry the phosphoserine modification. Positions 491–503 are interaction with NOS1; that stretch reads QELGDSLDDEIAV. Residues 501–503 carry the PDZ-binding motif; sequence IAV.

In terms of assembly, interacts with the PDZ domain of NOS1 or the second PDZ domain of DLG4 through its C-terminus. Interacts with RASD1 and SYN1, SYN2 and SYN3 via its PID domain. Forms a ternary complex with NOS1 and RASD1. Forms a ternary complex with NOS1 and SYN1. As to expression, mainly expressed in brain. Highly expressed in accessory olfactory bulb, caudate-putamen, cerebellum, cerebral cortex, dentate gyrus of the hippocampus, islands of Calleja, olfactory bulb and supraoptic nucleus. Expressed in kidney glomeruli podocytes (at protein level).

It localises to the cell projection. The protein resides in the filopodium. It is found in the podosome. Adapter protein involved in neuronal nitric-oxide (NO) synthesis regulation via its association with nNOS/NOS1. The complex formed with NOS1 and synapsins is necessary for specific NO and synapsin functions at a presynaptic level. Mediates an indirect interaction between NOS1 and RASD1 leading to enhance the ability of NOS1 to activate RASD1. Competes with DLG4 for interaction with NOS1, possibly affecting NOS1 activity by regulating the interaction between NOS1 and DLG4. In kidney podocytes, plays a role in podosomes and filopodia formation through CDC42 activation. This chain is Carboxyl-terminal PDZ ligand of neuronal nitric oxide synthase protein, found in Rattus norvegicus (Rat).